Reading from the N-terminus, the 154-residue chain is MATFSQKPAEVVKKWVLIDAEDLVVGRLASLVANRLRGKHKATFTPHVDDGDNVIIINADKVVLTGKKYTDKKYYWHTGHPGGIKERTARQILEGRFPERVLEKAIERMIPRGPLGRRQMKNLRVYAGPNHQHEAQQPEVLDVAALNRKNKGNA.

This sequence belongs to the universal ribosomal protein uL13 family. In terms of assembly, part of the 50S ribosomal subunit.

This protein is one of the early assembly proteins of the 50S ribosomal subunit, although it is not seen to bind rRNA by itself. It is important during the early stages of 50S assembly. This is Large ribosomal subunit protein uL13 from Brucella canis (strain ATCC 23365 / NCTC 10854 / RM-666).